Consider the following 130-residue polypeptide: MAENQYYGTGRRKNSAARVFIKPGNGKIVINQRSLEQYFGRETARMVVRQPLELVDMVEKLDLYITVKGGGISGQAGAIRHGITRALMEYDESLRSELRKAGFVTRDARQVERKKVGLRKARRRPQFSKR.

Belongs to the universal ribosomal protein uS9 family.

The polypeptide is Small ribosomal subunit protein uS9 (Shigella sonnei (strain Ss046)).